The sequence spans 298 residues: Homoserine kinase (298 aa).

92 to 102 (PLARGLGSSAT) provides a ligand contact to ATP.

This sequence belongs to the GHMP kinase family. Homoserine kinase subfamily.

It localises to the cytoplasm. It catalyses the reaction L-homoserine + ATP = O-phospho-L-homoserine + ADP + H(+). It participates in amino-acid biosynthesis; L-threonine biosynthesis; L-threonine from L-aspartate: step 4/5. In terms of biological role, catalyzes the ATP-dependent phosphorylation of L-homoserine to L-homoserine phosphate. This is Homoserine kinase (thrB) from Nostoc sp. (strain PCC 7120 / SAG 25.82 / UTEX 2576).